Consider the following 693-residue polypeptide: Glycine--tRNA ligase beta subunit (693 aa).

This sequence belongs to the class-II aminoacyl-tRNA synthetase family. As to quaternary structure, tetramer of two alpha and two beta subunits.

The protein resides in the cytoplasm. The enzyme catalyses tRNA(Gly) + glycine + ATP = glycyl-tRNA(Gly) + AMP + diphosphate. The polypeptide is Glycine--tRNA ligase beta subunit (Vibrio campbellii (strain ATCC BAA-1116)).